The sequence spans 591 residues: PDZ and LIM domain protein 5 (591 aa).

Position 2 is an N-acetylserine (S2). S2 bears the Phosphoserine mark. Positions 2 to 85 constitute a PDZ domain; that stretch reads SNYSVSLVGP…SLNMTLQRAS (84 aa). N6-acetyllysine; alternate is present on K89. K89 is subject to N6-succinyllysine; alternate. Residue K89 forms a Glycyl lysine isopeptide (Lys-Gly) (interchain with G-Cter in SUMO2); alternate linkage. 5 positions are modified to phosphoserine: E102, K105, S111, S134, and S137. Disordered regions lie at residues 121-166 and 186-398; these read TNMA…PTPV and SADQ…DQDT. Residues 134–143 show a composition bias toward polar residues; it reads SVSSPKVTSI. Residues 144 to 166 are compositionally biased toward low complexity; the sequence is PSPSSAFTPAHAATSSHASPTPV. Polar residues-rich tracts occupy residues 186–195 and 205–217; these read SADQCSSPPN and RQPTVTSVCSESA. Phosphoserine is present on residues Q218, S228, and S260. Composition is skewed to basic and acidic residues over residues 258-273 and 294-304; these read DASKKRLIEDTEDWRP and HLTESENDNTK. Low complexity predominate over residues 310–339; it reads QEPSQQPASSGASPLSASEGPESPGSSRPS. Phosphoserine is present on residues S313, P316, and S322. K350 is subject to N6-acetyllysine. A compositionally biased stretch (polar residues) spans 353–385; it reads GSTSVKSPSWQRPNQAAPSTGRISNNARSSGTG. 2 positions are modified to phosphoserine: S359 and S361. 3 LIM zinc-binding domains span residues 413–472, 472–531, and 531–591; these read PMCA…FFAP, PECG…LFGT, and TICR…SVNF.

As to quaternary structure, interacts with various PKC isoforms through the LIM domains. Interacts with actin and alpha-actinin through the PDZ domain. Interacts (via LIM domains) with SIPA1L1/SPAR; this interaction may occur preferentially with isoform 1.

It is found in the postsynaptic density. The protein resides in the presynapse. Its subcellular location is the postsynapse. The protein localises to the cytoplasm. It localises to the cytosol. May play an important role in the heart development by scaffolding PKC to the Z-disk region. May play a role in the regulation of cardiomyocyte expansion. Isoforms lacking the LIM domains may negatively modulate the scaffolding activity of isoform 1. Overexpression promotes the development of heart hypertrophy. Contributes to the regulation of dendritic spine morphogenesis in neurons. May be required to restrain postsynaptic growth of excitatory synapses. Isoform 1, but not isoform 2, expression favors spine thinning and elongation. This Mus musculus (Mouse) protein is PDZ and LIM domain protein 5.